The sequence spans 118 residues: Ribonuclease P protein component (118 aa).

This sequence belongs to the RnpA family. In terms of assembly, consists of a catalytic RNA component (M1 or rnpB) and a protein subunit.

The catalysed reaction is Endonucleolytic cleavage of RNA, removing 5'-extranucleotides from tRNA precursor.. RNaseP catalyzes the removal of the 5'-leader sequence from pre-tRNA to produce the mature 5'-terminus. It can also cleave other RNA substrates such as 4.5S RNA. The protein component plays an auxiliary but essential role in vivo by binding to the 5'-leader sequence and broadening the substrate specificity of the ribozyme. The sequence is that of Ribonuclease P protein component from Rickettsia akari (strain Hartford).